A 335-amino-acid polypeptide reads, in one-letter code: Nucleoid-associated protein YejK (335 aa).

The protein belongs to the YejK family.

Its subcellular location is the cytoplasm. The protein resides in the nucleoid. This chain is Nucleoid-associated protein YejK, found in Shigella dysenteriae serotype 1 (strain Sd197).